A 123-amino-acid polypeptide reads, in one-letter code: MPTINQLIRKPREAQKARDKAPALQSSPQKRGVCTRVYTTTPKKPNSALRKVAKVRLTNSYEVIGYIPGEGHNLQEHSVVMIRGGRVKDLPGVRYHILRGVLDTQGVKNRKQRRSKYGAKRPK.

The tract at residues 1 to 32 (MPTINQLIRKPREAQKARDKAPALQSSPQKRG) is disordered. Basic and acidic residues predominate over residues 10 to 21 (KPREAQKARDKA). At aspartate 89 the chain carries 3-methylthioaspartic acid.

The protein belongs to the universal ribosomal protein uS12 family. In terms of assembly, part of the 30S ribosomal subunit. Contacts proteins S8 and S17. May interact with IF1 in the 30S initiation complex.

Functionally, with S4 and S5 plays an important role in translational accuracy. In terms of biological role, interacts with and stabilizes bases of the 16S rRNA that are involved in tRNA selection in the A site and with the mRNA backbone. Located at the interface of the 30S and 50S subunits, it traverses the body of the 30S subunit contacting proteins on the other side and probably holding the rRNA structure together. The combined cluster of proteins S8, S12 and S17 appears to hold together the shoulder and platform of the 30S subunit. This Azorhizobium caulinodans (strain ATCC 43989 / DSM 5975 / JCM 20966 / LMG 6465 / NBRC 14845 / NCIMB 13405 / ORS 571) protein is Small ribosomal subunit protein uS12.